Consider the following 192-residue polypeptide: Cytochrome b-245 light chain (192 aa).

Residues 2–7 (GQIEWA) are Cytoplasmic-facing. The chain crosses the membrane as a helical span at residues 8-30 (MWANEQALASGLILITGGIVATA). Residues 31-35 (GQFAQ) lie on the Extracellular side of the membrane. A helical transmembrane segment spans residues 36-53 (WYLGAYSIAAGVLICLLE). The Cytoplasmic portion of the chain corresponds to 54 to 69 (YPRGKRSKGSTMERCG). An intramembrane segment occupies 70–80 (QKYLTRAVKVF). The Cytoplasmic segment spans residues 81 to 86 (GPLTSN). The helical transmembrane segment at 87–104 (YYIRAFLHLGLSVPAGFL) threads the bilayer. Position 105 (leucine 105) is a topological domain, extracellular. Residues 106 to 126 (ATILGTACLAIASSIYLLAAI) form a helical membrane-spanning segment. Topologically, residues 127–192 (HGEHWTPIET…NPMPVTDEVV (66 aa)) are cytoplasmic. A disordered region spans residues 134 to 192 (IETKPKERPQVGGTIKQPPSNPPPRPPAEARKKPSEEEVAGVPGGGPQENPMPVTDEVV). Threonine 147 is subject to Phosphothreonine. Lysine 149 is covalently cross-linked (Glycyl lysine isopeptide (Lys-Gly) (interchain with G-Cter in ubiquitin)). Serine 168 is modified (phosphoserine).

It belongs to the p22phox family. As to quaternary structure, component of the phagocyte NADPH oxidase core complex/cytochrome b558 complex, composed of CYBB (heavy chain (beta)) and CYBA (light chain (alpha)). Component of the phagocyte NADPH oxidase complex composed of an obligatory core heterodimer formed by the membrane proteins CYBA and CYBB and the cytosolic regulatory subunits NCF1/p47-phox, NCF2/p67-phox, NCF4/p40-phox and the small GTPase RAC1 or RAC2. Interacts with NCF1 (via SH3 domain). Interacts with SH3PXD2A. Interacts with DUOX1, DUOX2 and TPO. Interacts with NOX4; this interaction mediates superoxide generation. Interacts with calprotectin (S100A8/9). Interacts with GBP7. Interacts with NOXO1. Forms a heterodimer with NOX3 and is essential for activity and cell membrane localization of NOX3. Interacts with NOX1. Phosphorylation at Thr-147 enhances NADPH oxidase activity by promoting NCF1/p47-phox binding. Post-translationally, ubiquitinated at Lys-149 likely by RNF145.

The protein localises to the cell membrane. Functionally, subunit of NADPH oxidase complexes that is required for the NADPH oxidase activity that generates, in various cell types, superoxide from molecular oxygen utilizing NADPH as an electron donor. Subunit of the phagocyte NADPH oxidase complex that mediates the transfer of electrons from cytosolic NADPH to O2 to produce the superoxide anion (O2(-)). In the activated complex, electrons are first transferred from NADPH to flavin adenine dinucleotide (FAD) and subsequently transferred via two heme molecules to molecular oxygen, producing superoxide through an outer-sphere reaction. Activation of the NADPH oxidase complex is initiated by the assembly of cytosolic subunits of the NADPH oxidase complex with the core NADPH oxidase complex to form a complex at the plasma membrane or phagosomal membrane. This activation process is initiated by phosphorylation dependent binding of the cytosolic NCF1/p47-phox subunit to the C-terminus of CYBA/p22-phox. Aassociates with NOX3 to form a functional NADPH oxidase constitutively generating superoxide. This Tursiops truncatus (Atlantic bottle-nosed dolphin) protein is Cytochrome b-245 light chain.